The following is a 22-amino-acid chain: Odorant-binding protein 1 (22 aa).

It belongs to the calycin superfamily. Lipocalin family. Homodimer. The N-terminus is blocked.

Binds the chemical odorant, 2-isobutyl-3-methoxypyrazine. This chain is Odorant-binding protein 1, found in Oryctolagus cuniculus (Rabbit).